Consider the following 135-residue polypeptide: MDSEESRCFSGYDGNRFKLVILASQRAHELSSGAATLVDRQGDKNTVVALREIASNQLDLSTVFGLAVQRCRKYLEEFAGSRGIAGHSSHVSPSRSSRHTGLGKSFVDNKSTYSASFLDQDKFLSGGKDDGIEGF.

The tract at residues 84–106 (IAGHSSHVSPSRSSRHTGLGKSF) is disordered.

This sequence belongs to the RNA polymerase subunit omega family. The RNAP catalytic core consists of 2 alpha, 1 beta, 1 beta' and 1 omega subunit. When a sigma factor is associated with the core the holoenzyme is formed, which can initiate transcription.

The catalysed reaction is RNA(n) + a ribonucleoside 5'-triphosphate = RNA(n+1) + diphosphate. Promotes RNA polymerase assembly. Latches the N- and C-terminal regions of the beta' subunit thereby facilitating its interaction with the beta and alpha subunits. In Anaplasma phagocytophilum (strain HZ), this protein is DNA-directed RNA polymerase subunit omega.